Reading from the N-terminus, the 496-residue chain is DNA-directed DNA/RNA polymerase mu (496 aa).

The segment at 1-22 (MLPKRRRVRAGSPHSAVASSTP) is disordered. At S12 the chain carries Phosphoserine. The segment covering 12-22 (SPHSAVASSTP) has biased composition (low complexity). One can recognise a BRCT domain in the interval 23–122 (PSVVRFPDVA…QPVPEEGRHH (100 aa)). T241 and V243 together coordinate Na(+). The interval 323–332 (RGKLQGHDVD) is involved in ssDNA binding. Residues D330, D332, and D420 each contribute to the Mg(2+) site.

It belongs to the DNA polymerase type-X family. It depends on Mg(2+) as a cofactor.

The protein resides in the nucleus. The catalysed reaction is DNA(n) + a 2'-deoxyribonucleoside 5'-triphosphate = DNA(n+1) + diphosphate. Gap-filling polymerase involved in repair of DNA double-strand breaks by non-homologous end joining (NHEJ). Participates in immunoglobulin (Ig) light chain gene rearrangement in V(D)J recombination. This chain is DNA-directed DNA/RNA polymerase mu (Polm), found in Mus musculus (Mouse).